A 248-amino-acid chain; its full sequence is ATP synthase subunit a, chloroplastic (248 aa).

The next 5 membrane-spanning stretches (helical) occupy residues 38-58, 96-116, 135-155, 200-220, and 221-241; these read QVLL…VLTV, VPFI…GALV, INTT…AGLA, LVVA…VMLL, and GLFT…AYIG.

The protein belongs to the ATPase A chain family. F-type ATPases have 2 components, CF(1) - the catalytic core - and CF(0) - the membrane proton channel. CF(1) has five subunits: alpha(3), beta(3), gamma(1), delta(1), epsilon(1). CF(0) has four main subunits: a, b, b' and c.

Its subcellular location is the plastid. The protein localises to the chloroplast thylakoid membrane. In terms of biological role, key component of the proton channel; it plays a direct role in the translocation of protons across the membrane. The protein is ATP synthase subunit a, chloroplastic of Welwitschia mirabilis (Tree tumbo).